A 25-amino-acid polypeptide reads, in one-letter code: Omega conotoxin-CVIF (25 aa).

3 disulfide bridges follow: C1–C16, C8–C20, and C15–C25. Residue C25 is modified to Cysteine amide.

Belongs to the conotoxin O1 superfamily. As to expression, expressed by the venom duct.

It localises to the secreted. In terms of biological role, omega-conotoxins act at presynaptic membranes, they bind and block voltage-gated calcium channels. This toxin blocks N-type calcium channels (Cav2.2/CACNA1B). It shows a higher potency when Cav2.2/CACNA1B is only expressed with the ancillary subunit CACNB3 (IC(50)=0.1 nM) than on Cav2.2/CACNA1B expressed with the ancillary subunits CACNA2D1 and CACNB3 (IC(50)=19.9 nM). The Cav2.2/CACNA1B block by this toxin is voltage-independent, whereas the recovery from toxin block is voltage-dependent. There is a low recovery at physiological membrane potential and a high recovery with hyperpolarized potential. This indicates that the toxin has a higher affinity for Cav2.2/CACNA1B in the inactivated state. It is noteworthy that ancillary subunits beta modulate recovery from this toxin block. Cav2.2/CACNA1B expressed with the ancillary subunit CACNB2a (isoform 2a) almost recover completely from this toxin block, whereas an expression with CACNB3 exhibits relatively weak recovery. Inhibition by this toxin of excitatory synaptic transmission is reversible. In vivo, when tested on rat model of persistent pain, this toxin blocks chronic pain behavior. The chain is Omega conotoxin-CVIF from Conus catus (Cat cone).